A 63-amino-acid polypeptide reads, in one-letter code: 2-hydroxymuconate tautomerase (63 aa).

Catalysis depends on Pro-2, which acts as the Proton acceptor; via imino nitrogen.

This sequence belongs to the 4-oxalocrotonate tautomerase family. In terms of assembly, homohexamer.

The catalysed reaction is (2Z,4E)-2-hydroxyhexa-2,4-dienedioate = (3E)-2-oxohex-3-enedioate. The protein operates within aromatic compound metabolism; salicylate degradation. Functionally, catalyzes the ketonization of 2-hydroxymuconate stereoselectively to yield 2-oxo-3-hexenedioate. This Stutzerimonas stutzeri (Pseudomonas stutzeri) protein is 2-hydroxymuconate tautomerase (nahJ).